The chain runs to 193 residues: NADH-quinone oxidoreductase subunit B (193 aa).

The segment covering 1–11 has biased composition (polar residues); it reads MGLTGTNTTLV. Residues 1–23 are disordered; sequence MGLTGTNTTLVAPQPKGILDPRT. Cys-72, Cys-73, Cys-137, and Cys-167 together coordinate [4Fe-4S] cluster.

Belongs to the complex I 20 kDa subunit family. As to quaternary structure, NDH-1 is composed of 14 different subunits. Subunits NuoB, C, D, E, F, and G constitute the peripheral sector of the complex. Requires [4Fe-4S] cluster as cofactor.

Its subcellular location is the cell inner membrane. It catalyses the reaction a quinone + NADH + 5 H(+)(in) = a quinol + NAD(+) + 4 H(+)(out). In terms of biological role, NDH-1 shuttles electrons from NADH, via FMN and iron-sulfur (Fe-S) centers, to quinones in the respiratory chain. Couples the redox reaction to proton translocation (for every two electrons transferred, four hydrogen ions are translocated across the cytoplasmic membrane), and thus conserves the redox energy in a proton gradient. This Brucella canis (strain ATCC 23365 / NCTC 10854 / RM-666) protein is NADH-quinone oxidoreductase subunit B.